A 146-amino-acid chain; its full sequence is Ribonuclease H (146 aa).

In terms of domain architecture, RNase H type-1 spans 1–141; the sequence is MKKVQLITDG…CDELATRAAR (141 aa). Residues Asp-9, Glu-47, Asp-69, and Asp-133 each coordinate Mg(2+).

It belongs to the RNase H family. As to quaternary structure, monomer. Requires Mg(2+) as cofactor.

The protein resides in the cytoplasm. It catalyses the reaction Endonucleolytic cleavage to 5'-phosphomonoester.. Functionally, endonuclease that specifically degrades the RNA of RNA-DNA hybrids. This Solibacter usitatus (strain Ellin6076) protein is Ribonuclease H.